A 159-amino-acid chain; its full sequence is Transcriptional repressor NrdR (159 aa).

Residues Met1–Ser11 show a composition bias toward polar residues. The tract at residues Met1 to Ser21 is disordered. A zinc finger spans residues Cys3 to Cys34. The ATP-cone domain occupies Val49–Asp139.

This sequence belongs to the NrdR family. Zn(2+) serves as cofactor.

Functionally, negatively regulates transcription of bacterial ribonucleotide reductase nrd genes and operons by binding to NrdR-boxes. The sequence is that of Transcriptional repressor NrdR from Prochlorococcus marinus (strain MIT 9215).